The following is a 606-amino-acid chain: Arginine--tRNA ligase (606 aa).

Positions 126–136 (PNTNKPLHLGH) match the 'HIGH' region motif.

This sequence belongs to the class-I aminoacyl-tRNA synthetase family. As to quaternary structure, monomer.

The protein localises to the cytoplasm. It catalyses the reaction tRNA(Arg) + L-arginine + ATP = L-arginyl-tRNA(Arg) + AMP + diphosphate. In Phocaeicola vulgatus (strain ATCC 8482 / DSM 1447 / JCM 5826 / CCUG 4940 / NBRC 14291 / NCTC 11154) (Bacteroides vulgatus), this protein is Arginine--tRNA ligase.